The primary structure comprises 223 residues: Small ribosomal subunit protein uS3 (223 aa).

The KH type-2 domain occupies 39 to 108; sequence IRNFVKKNSY…NILINIVEVK (70 aa).

It belongs to the universal ribosomal protein uS3 family. In terms of assembly, part of the 30S ribosomal subunit. Forms a tight complex with proteins S10 and S14.

In terms of biological role, binds the lower part of the 30S subunit head. Binds mRNA in the 70S ribosome, positioning it for translation. In Clostridium botulinum (strain Hall / ATCC 3502 / NCTC 13319 / Type A), this protein is Small ribosomal subunit protein uS3.